The sequence spans 344 residues: Tetraacyldisaccharide 4'-kinase (344 aa).

65–72 is an ATP binding site; the sequence is HAGGTGKT.

The protein belongs to the LpxK family.

It catalyses the reaction a lipid A disaccharide + ATP = a lipid IVA + ADP + H(+). It functions in the pathway glycolipid biosynthesis; lipid IV(A) biosynthesis; lipid IV(A) from (3R)-3-hydroxytetradecanoyl-[acyl-carrier-protein] and UDP-N-acetyl-alpha-D-glucosamine: step 6/6. Functionally, transfers the gamma-phosphate of ATP to the 4'-position of a tetraacyldisaccharide 1-phosphate intermediate (termed DS-1-P) to form tetraacyldisaccharide 1,4'-bis-phosphate (lipid IVA). The protein is Tetraacyldisaccharide 4'-kinase of Neisseria meningitidis serogroup B (strain ATCC BAA-335 / MC58).